Reading from the N-terminus, the 319-residue chain is Transmembrane and ubiquitin-like domain-containing protein 2 (319 aa).

A helical membrane pass occupies residues 36–56 (VMVVAGVVVLTLALVLAWLST). Disordered regions lie at residues 88–130 (VNQG…GDME) and 146–165 (QAGL…DSTC). The segment covering 95 to 111 (PTEHPHPSGGSDDKAEE) has biased composition (basic and acidic residues). The Ubiquitin-like domain maps to 173–246 (INVRLKFLND…IHCHRSPPGA (74 aa)). A run of 2 helical transmembrane segments spans residues 264–284 (LGVN…GVVW) and 293–313 (FFTA…SFLV).

It is found in the membrane. The sequence is that of Transmembrane and ubiquitin-like domain-containing protein 2 (Tmub2) from Rattus norvegicus (Rat).